The primary structure comprises 249 residues: Photosystem I-associated linker protein CpcL (249 aa).

The PBS-linker domain maps to 11-189 (VSQNQRVTNY…PRYGADHREK (179 aa)). Residues 223–247 (VVLYVGGALVSLGIIAVALSAWGII) traverse the membrane as a helical segment.

Belongs to the phycobilisome linker protein family. In terms of assembly, part of a specialized phycobilisome (PBS), a structure that is usually composed of two distinct substructures: a core complex and a number of rods radiating from the core. This protein is part of a core-less PBS rod (called CpcL-PBS) with on average 5 stacked phycocyanin hexamers (PC, CpcA and CpcB). Linker CpcL connects the PC stack to the thylakoid, the hexamers are linked by 1 copy of CpcC1, 3 copies of CpcC2 and the stack is terminated by a single copy of CpcD. Ferredoxin--NADP reductase (petH) is also part of the complex. CpcL-PBS has no central core proteins (allophycocyanin ApcA, ApcB) nor phycobiliprotein ApcE.

It is found in the cellular thylakoid membrane. In terms of biological role, rod linker protein, associated with phycocyanin. Linker polypeptides determine the state of aggregation and the location of the disk-shaped phycobiliprotein units within the phycobilisome and modulate their spectroscopic properties in order to mediate a directed and optimal energy transfer. Plays a role in energy transfer from the phycobilisome to photosystem I (PSI). Although able to transfer energy to both photosystems, this is predominantly a PSI antenna. This is Photosystem I-associated linker protein CpcL from Synechocystis sp. (strain ATCC 27184 / PCC 6803 / Kazusa).